We begin with the raw amino-acid sequence, 756 residues long: Hormone-sensitive lipase (756 aa).

The Involved in the stabilization of the negatively charged intermediate by the formation of the oxyanion hole signature appears at 350 to 352 (HGG). The active site involves Ser-424. Disordered regions lie at residues 542-570 (SVSK…TDSL) and 581-600 (RNSS…ETLG). Ser-552 bears the Phosphoserine; by PKA mark. Ser-554 carries the phosphoserine; by AMPK modification. Positions 581-596 (RNSSDTTDTPELSLSA) are enriched in polar residues. Ser-595 and Ser-649 each carry phosphoserine. Active-site residues include Asp-692 and His-722.

It belongs to the 'GDXG' lipolytic enzyme family. Monomer and homodimer. Interacts with CAVIN1 in the adipocyte cytoplasm. Interacts with PLIN5. In terms of processing, phosphorylation by AMPK reduces its translocation towards the lipid droplets.

It localises to the cell membrane. The protein resides in the membrane. Its subcellular location is the caveola. It is found in the cytoplasm. The protein localises to the cytosol. It localises to the lipid droplet. The catalysed reaction is a diacylglycerol + H2O = a monoacylglycerol + a fatty acid + H(+). It carries out the reaction a triacylglycerol + H2O = a diacylglycerol + a fatty acid + H(+). It catalyses the reaction a monoacylglycerol + H2O = glycerol + a fatty acid + H(+). The enzyme catalyses Hydrolyzes glycerol monoesters of long-chain fatty acids.. The catalysed reaction is 1,2-di-(9Z-octadecenoyl)-glycerol + (9Z)-octadecenoate + H(+) = 1,2,3-tri-(9Z-octadecenoyl)-glycerol + H2O. It carries out the reaction 2,3-di-(9Z)-octadecenoyl-sn-glycerol + H2O = 2-(9Z-octadecenoyl)-glycerol + (9Z)-octadecenoate + H(+). It catalyses the reaction cholesteryl (9Z-octadecenoate) + H2O = cholesterol + (9Z)-octadecenoate + H(+). The enzyme catalyses 1,2,3-tri-(9Z-octadecenoyl)-glycerol + H2O = di-(9Z)-octadecenoylglycerol + (9Z)-octadecenoate + H(+). The catalysed reaction is all-trans-retinyl hexadecanoate + H2O = all-trans-retinol + hexadecanoate + H(+). It carries out the reaction 1,2-di-(9Z-octadecenoyl)-glycerol + H2O = (9Z-octadecenoyl)-glycerol + (9Z)-octadecenoate + H(+). It catalyses the reaction 2-(5Z,8Z,11Z,14Z-eicosatetraenoyl)-glycerol + H2O = glycerol + (5Z,8Z,11Z,14Z)-eicosatetraenoate + H(+). The enzyme catalyses 1-(9Z-octadecenoyl)-glycerol + H2O = glycerol + (9Z)-octadecenoate + H(+). The catalysed reaction is 2-(9Z-octadecenoyl)-glycerol + H2O = glycerol + (9Z)-octadecenoate + H(+). It carries out the reaction 1-O-hexadecyl-2-acetyl-sn-glycerol + H2O = 1-O-hexadecyl-sn-glycerol + acetate + H(+). It catalyses the reaction 1,2-di-(9Z-octadecenoyl)-sn-glycerol + H2O = (9Z-octadecenoyl)-glycerol + (9Z)-octadecenoate + H(+). The enzyme catalyses 1,3-di-(9Z-octadecenoyl)-glycerol + H2O = 1-(9Z-octadecenoyl)-glycerol + (9Z)-octadecenoate + H(+). The catalysed reaction is 1,2-di-(9Z-octadecenoyl)-glycerol + H2O = 2-(9Z-octadecenoyl)-glycerol + (9Z)-octadecenoate + H(+). The protein operates within glycerolipid metabolism; triacylglycerol degradation. Its function is as follows. Lipase with broad substrate specificity, catalyzing the hydrolysis of triacylglycerols (TAGs), diacylglycerols (DAGs), monoacylglycerols (MAGs), cholesteryl esters and retinyl esters. Shows a preferential hydrolysis of DAGs over TAGs and MAGs. Preferentially hydrolyzes fatty acid (FA) esters at the sn-3 position of the glycerol backbone in DAGs and FA esters at the sn-1 and sn-2 positions of the glycerol backbone in TAGs. Catalyzes the hydrolysis of 2-arachidonoylglycerol, an endocannabinoid and of 2-acetyl monoalkylglycerol ether, the penultimate precursor of the pathway for de novo synthesis of platelet-activating factor. In adipose tissue and heart, it primarily hydrolyzes stored triglycerides to free fatty acids, while in steroidogenic tissues, it principally converts cholesteryl esters to free cholesterol for steroid hormone production. The polypeptide is Hormone-sensitive lipase (LIPE) (Bos taurus (Bovine)).